We begin with the raw amino-acid sequence, 956 residues long: DNA ligase 4 (956 aa).

The ATP site is built by E307, K309, I310, R314, E371, F409, E476, K481, K498, and K500. Catalysis depends on K309, which acts as the N6-AMP-lysine intermediate. Residue E371 participates in Mg(2+) binding. Residue E476 participates in Mg(2+) binding. The tract at residues 666–700 (LEDRKRRNAGPGRGAKRLKLANVSSDEDELGTDER) is disordered. BRCT domains lie at 700-793 (RPTS…PRNL) and 857-956 (PKGM…DYPL).

This sequence belongs to the ATP-dependent DNA ligase family. Mg(2+) is required as a cofactor.

The protein localises to the nucleus. The enzyme catalyses ATP + (deoxyribonucleotide)n-3'-hydroxyl + 5'-phospho-(deoxyribonucleotide)m = (deoxyribonucleotide)n+m + AMP + diphosphate.. In terms of biological role, DNA ligase involved in DNA non-homologous end joining (NHEJ); required for double-strand break (DSB) repair. The sequence is that of DNA ligase 4 (LIG4) from Yarrowia lipolytica (strain CLIB 122 / E 150) (Yeast).